A 504-amino-acid polypeptide reads, in one-letter code: Arabinose import ATP-binding protein AraG (504 aa).

ABC transporter domains are found at residues leucine 8 to arginine 243 and tyrosine 256 to valine 499. Glycine 40–serine 47 contacts ATP.

The protein belongs to the ABC transporter superfamily. Arabinose importer (TC 3.A.1.2.2) family. In terms of assembly, the complex is composed of two ATP-binding proteins (AraG), two transmembrane proteins (AraH) and a solute-binding protein (AraF).

The protein localises to the cell inner membrane. It carries out the reaction L-arabinose(out) + ATP + H2O = L-arabinose(in) + ADP + phosphate + H(+). Its function is as follows. Part of the ABC transporter complex AraFGH involved in arabinose import. Responsible for energy coupling to the transport system. This Escherichia coli O157:H7 protein is Arabinose import ATP-binding protein AraG.